The sequence spans 859 residues: Protein argonaute-2 (859 aa).

Positions Met1–Pro27 are disordered. Tyr2 is subject to 3'-nitrotyrosine. A compositionally biased stretch (pro residues) spans Leu9–Pro27. Residues Pro229–Ala348 form the PAZ domain. The segment at Tyr311 to His316 is interaction with guide RNA. Ser387 is modified (phosphoserine). The Piwi domain maps to Leu517–Val818. The interval Gly524–Lys566 is interaction with guide RNA. The tract at residues Phe587–Pro590 is interaction with GW182 family members. Residue Asp597 coordinates a divalent metal cation. The segment at Leu650–Lys660 is interaction with GW182 family members. Asp669 is an a divalent metal cation binding site. Pro700 bears the 4-hydroxyproline mark. 3 interaction with guide RNA regions span residues Lys709–Arg710, His753–Arg761, and Tyr790–Arg812. Residue His807 coordinates a divalent metal cation. A phosphoserine mark is found at Ser824, Ser828, Ser831, and Ser834.

This sequence belongs to the argonaute family. Ago subfamily. As to quaternary structure, interacts with DICER1 through its Piwi domain and with TARBP2 during assembly of the RNA-induced silencing complex (RISC). Together, DICER1, AGO2 and TARBP2 constitute the trimeric RISC loading complex (RLC), or micro-RNA (miRNA) loading complex (miRLC). Within the RLC/miRLC, DICER1 and TARBP2 are required to process precursor miRNAs (pre-miRNAs) to mature miRNAs and then load them onto AGO2. AGO2 bound to the mature miRNA constitutes the minimal RISC and may subsequently dissociate from DICER1 and TARBP2. Note however that the term RISC has also been used to describe the trimeric RLC/miRLC. The formation of RISC complexes containing siRNAs rather than miRNAs appears to occur independently of DICER1. Interacts with AGO1. Also interacts with DDB1, DDX5, DDX6, DDX20, DHX30, DHX36, DDX47, DHX9, ELAVL, FXR1, GEMIN4, HNRNPF, IGF2BP1, ILF3, IMP8, MATR3, PABPC1, PRMT5, P4HA1, P4HB, RBM4, SART3, TNRC6A, TNRC6B, UPF1 and YBX1. Interacts with the P-body components DCP1A and XRN1. Associates with polysomes and messenger ribonucleoproteins (mNRPs). Interacts with RBM4; the interaction is modulated under stress-induced conditions, occurs under both cell proliferation and differentiation conditions and in an RNA- and phosphorylation-independent manner. Interacts with LIMD1, WTIP and AJUBA. Interacts with TRIM71; the interaction increases in presence of RNA. Interacts with APOBEC3G in an RNA-dependent manner. Interacts with APOBEC3A, APOBEC3C, APOBEC3F and APOBEC3H. Interacts with DICER1, TARBP2, EIF6, MOV10 and RPL7A (60S ribosome subunit); they form a large RNA-induced silencing complex (RISC). Interacts with FMR1. Interacts with ZFP36. Found in a complex, composed of AGO2, CHD7 and ARB2A. Interacts with RC3H1; the interaction is RNA independent. Interacts with SND1. Interacts with SYT11. Interacts with CLNK. Interacts with GARRE1. Interacts with GRB2; this interaction is important for the formation of a ternary complex containing GRB2, AGO2 and DICER1. In terms of assembly, (Microbial infection) Interacts with Epstein-Barr virus (EBV) tegument protein BGLF2; this interaction participates in the regulation of cellular miRNA by the virus, leading to enhanced SUMOylation. (Microbial infection) Interacts with rotavirus A non-structural protein 5; this interaction probably plays a role in the sequestration of AGO2 in viral factories. As to quaternary structure, (Microbial infection) Interacts with human herpesvirus 8 protein MTA/ORF57; this interaction inhibits P-body formation. It depends on Mg(2+) as a cofactor. Mn(2+) serves as cofactor. Hydroxylated. 4-hydroxylation appears to enhance protein stability but is not required for miRNA-binding or endonuclease activity. Post-translationally, ubiquitinated on surface-exposed lysines by a SCF-like E3 ubiquitin-protein ligase complex containing ZSWIM8 during target-directed microRNA degradation (TDMD), a process that mediates degradation of microRNAs (miRNAs). Ubiquitination by the SCF-like E3 ubiquitin-protein ligase complex containing ZSWIM8 leads to its subsequent degradation, thereby exposing miRNAs for degradation. ZSWIM8 recognizes and binds AGO2 when it is engaged with a TDMD target. In terms of processing, phosphorylated. A phosphorylation cycle of C-terminal serine cluster (Ser-824-Ser-834) regulates the release of target mRNAs. Target-binding leads to phosphorylation of these residues by CSNK1A1, which reduces the affinity of AGO2 for mRNA and enables target release. The ANKRD52-PPP6C phosphatase complex dephosphorylates the residues, which primes AGO2 for binding a new target. Phosphorylation at Ser-387 by AKT3; leads to up-regulate translational repression of microRNA target and down-regulate endonucleolytic cleavage.

It localises to the cytoplasm. Its subcellular location is the P-body. It is found in the nucleus. The catalysed reaction is Endonucleolytic cleavage to 5'-phosphomonoester.. Its activity is regulated as follows. Inhibited by EDTA. Its function is as follows. Required for RNA-mediated gene silencing (RNAi) by the RNA-induced silencing complex (RISC). The 'minimal RISC' appears to include AGO2 bound to a short guide RNA such as a microRNA (miRNA) or short interfering RNA (siRNA). These guide RNAs direct RISC to complementary mRNAs that are targets for RISC-mediated gene silencing. The precise mechanism of gene silencing depends on the degree of complementarity between the miRNA or siRNA and its target. Binding of RISC to a perfectly complementary mRNA generally results in silencing due to endonucleolytic cleavage of the mRNA specifically by AGO2. Binding of RISC to a partially complementary mRNA results in silencing through inhibition of translation, and this is independent of endonuclease activity. May inhibit translation initiation by binding to the 7-methylguanosine cap, thereby preventing the recruitment of the translation initiation factor eIF4-E. May also inhibit translation initiation via interaction with EIF6, which itself binds to the 60S ribosomal subunit and prevents its association with the 40S ribosomal subunit. The inhibition of translational initiation leads to the accumulation of the affected mRNA in cytoplasmic processing bodies (P-bodies), where mRNA degradation may subsequently occur. In some cases RISC-mediated translational repression is also observed for miRNAs that perfectly match the 3' untranslated region (3'-UTR). Can also up-regulate the translation of specific mRNAs under certain growth conditions. Binds to the AU element of the 3'-UTR of the TNF (TNF-alpha) mRNA and up-regulates translation under conditions of serum starvation. Also required for transcriptional gene silencing (TGS), in which short RNAs known as antigene RNAs or agRNAs direct the transcriptional repression of complementary promoter regions. In terms of biological role, (Microbial infection) Upon Sars-CoV-2 infection, associates with viral miRNA-like small RNA, CoV2-miR-O7a, and may repress mRNAs, such as BATF2, to evade the IFN response. The protein is Protein argonaute-2 of Homo sapiens (Human).